The chain runs to 571 residues: Dehydrocurvularin exporter (571 aa).

A disordered region spans residues Met1–Asp34. Over residues Glu8–Arg17 the composition is skewed to basic and acidic residues. Residues Gln19 to Gln28 are compositionally biased toward polar residues. Asn25 carries N-linked (GlcNAc...) asparagine glycosylation. Helical transmembrane passes span Ile47–Ile67, Trp86–Phe106, Phe120–Ile140, Ala143–Val163, Leu171–Gly191, Trp202–Leu222, Ile238–Thr258, Val275–Phe295, Leu317–Phe337, Val350–Ile370, Phe379–Val399, Met405–Met425, Ile443–Phe463, and Val514–Phe534. The interval Pro538–Ser571 is disordered.

This sequence belongs to the major facilitator superfamily. TCR/Tet family.

It is found in the cell membrane. Efflux pump that is probably involved in the export of dehydrocurvularin. The polypeptide is Dehydrocurvularin exporter (Aspergillus terreus).